A 342-amino-acid polypeptide reads, in one-letter code: Dihydroorotate dehydrogenase (quinone) (342 aa).

FMN-binding positions include 60-64 and Thr84; that span reads AGFDK. Lys64 lines the substrate pocket. Substrate is bound at residue 109-113; that stretch reads NRMGF. FMN is bound by residues Asn137 and Asn170. Position 170 (Asn170) interacts with substrate. The active-site Nucleophile is Ser173. Asn175 contacts substrate. FMN-binding residues include Lys215 and Thr243. 244-245 lines the substrate pocket; the sequence is NT. FMN-binding positions include Gly266, Gly295, and 316 to 317; that span reads YT.

This sequence belongs to the dihydroorotate dehydrogenase family. Type 2 subfamily. In terms of assembly, monomer. Requires FMN as cofactor.

The protein localises to the cell membrane. The enzyme catalyses (S)-dihydroorotate + a quinone = orotate + a quinol. It participates in pyrimidine metabolism; UMP biosynthesis via de novo pathway; orotate from (S)-dihydroorotate (quinone route): step 1/1. Catalyzes the conversion of dihydroorotate to orotate with quinone as electron acceptor. The protein is Dihydroorotate dehydrogenase (quinone) of Halorhodospira halophila (strain DSM 244 / SL1) (Ectothiorhodospira halophila (strain DSM 244 / SL1)).